We begin with the raw amino-acid sequence, 143 residues long: Granulocyte-macrophage colony-stimulating factor (143 aa).

Residues 1-17 (MWLQNLLLLGTVVCSFS) form the signal peptide. An O-linked (GalNAc...) threonine glycan is attached at Thr27. 2 N-linked (GlcNAc...) asparagine glycosylation sites follow: Asn44 and Asn54. Intrachain disulfides connect Cys70–Cys112 and Cys104–Cys137.

This sequence belongs to the GM-CSF family. In terms of assembly, monomer. The signaling GM-CSF receptor complex is a dodecamer of two head-to-head hexamers of two alpha, two beta, and two ligand subunits.

The protein localises to the secreted. Functionally, cytokine that stimulates the growth and differentiation of hematopoietic precursor cells from various lineages, including granulocytes, macrophages, eosinophils and erythrocytes. In Bos taurus (Bovine), this protein is Granulocyte-macrophage colony-stimulating factor (CSF2).